Consider the following 181-residue polypeptide: UPF0397 protein STER_0346 (181 aa).

The next 5 membrane-spanning stretches (helical) occupy residues 11 to 31 (ATGI…IPIF), 45 to 65 (LFSV…GHAL), 72 to 92 (GNIS…IGLF), 109 to 129 (IWFN…VTPI), and 147 to 167 (FVAG…LLAI).

This sequence belongs to the UPF0397 family.

It localises to the cell membrane. This Streptococcus thermophilus (strain ATCC BAA-491 / LMD-9) protein is UPF0397 protein STER_0346.